Reading from the N-terminus, the 350-residue chain is MAARLCTRCLPPVWLCRQAWQGQGRHYRAALCTELKQPLTIQEVAPRPVGPQEVRVDVHFCGVNFADILACRGQYQEKPPLPFTPGMEFSGAVLETGTDVSTVKKGDRVIGVSSFHAMAEQCITDQKTLWRIPENVSLQDAAVLPVSYGTAILAVDHRARIQPGETVLVTAAAGATGLAVIDVATNVFRAKVIAATGSDEKCKLAVQRGAQFSVNYSQGSLRDAVKKLAGSGGVNVAIDMVGGDVFLESLRSLAWEGRIVVLGFAGGNIASVPSNLLLLKNISAMGLYWGRYQHQDFAVFSKSMSTAMQYCQQGLIHPHTGAVFKLEKINDAFLHVMQRKSTGKVLLSLK.

N6-acetyllysine is present on lysine 36. Lysine 201 carries the N6-succinyllysine modification. N6-acetyllysine is present on residues lysine 302 and lysine 328.

Belongs to the zinc-containing alcohol dehydrogenase family. Quinone oxidoreductase subfamily.

In Mus musculus (Mouse), this protein is Quinone oxidoreductase-like protein 2.